The following is a 134-amino-acid chain: Holo-[acyl-carrier-protein] synthase (134 aa).

Residues Asp-8 and Glu-57 each coordinate Mg(2+).

It belongs to the P-Pant transferase superfamily. AcpS family. It depends on Mg(2+) as a cofactor.

The protein resides in the cytoplasm. It carries out the reaction apo-[ACP] + CoA = holo-[ACP] + adenosine 3',5'-bisphosphate + H(+). Transfers the 4'-phosphopantetheine moiety from coenzyme A to a Ser of acyl-carrier-protein. This chain is Holo-[acyl-carrier-protein] synthase, found in Agrobacterium fabrum (strain C58 / ATCC 33970) (Agrobacterium tumefaciens (strain C58)).